Reading from the N-terminus, the 140-residue chain is ATP synthase epsilon chain (140 aa).

The protein belongs to the ATPase epsilon chain family. As to quaternary structure, F-type ATPases have 2 components, CF(1) - the catalytic core - and CF(0) - the membrane proton channel. CF(1) has five subunits: alpha(3), beta(3), gamma(1), delta(1), epsilon(1). CF(0) has three main subunits: a, b and c.

It is found in the cell inner membrane. Functionally, produces ATP from ADP in the presence of a proton gradient across the membrane. This is ATP synthase epsilon chain from Vibrio parahaemolyticus serotype O3:K6 (strain RIMD 2210633).